The sequence spans 347 residues: MSVMFDSQAAIYPFPPKPTPLNDDEKQFYREKIKRLLKERNAVMVAHYYTDPEIQQLAEETGGCISDSLEMARFGAKHAASTLLVAGVRFMGETAKILSPEKNVLMPTLAAECSLDLGCPIDEFSAFCDAHPDRTVVVYANTSAAVKARADWVVTSSIAVELIEHLDSLGEKIIWAPDRHLGNYVQKQTRADVLCWQGACIVHDEFKTQALTRLKKIYPDAAILVHPESPRSIVEMADAVGSTSQLIKAAKTLPHRQLIVATDRGIFYKMQQAVPDKELLEAPTAGEGATCRSCAHCPWMAMNGLKAIAEGLEQGGAAHEIQVDAALRESALLPLNRMLDFAATLRV.

Iminosuccinate contacts are provided by His-47 and Ser-68. Position 113 (Cys-113) interacts with [4Fe-4S] cluster. Iminosuccinate contacts are provided by residues 139-141 (YAN) and Ser-156. Cys-200 is a [4Fe-4S] cluster binding site. Residues 226 to 228 (HPE) and Thr-243 each bind iminosuccinate. Cys-297 provides a ligand contact to [4Fe-4S] cluster.

Belongs to the quinolinate synthase family. Type 1 subfamily. [4Fe-4S] cluster serves as cofactor.

Its subcellular location is the cytoplasm. The enzyme catalyses iminosuccinate + dihydroxyacetone phosphate = quinolinate + phosphate + 2 H2O + H(+). It participates in cofactor biosynthesis; NAD(+) biosynthesis; quinolinate from iminoaspartate: step 1/1. Functionally, catalyzes the condensation of iminoaspartate with dihydroxyacetone phosphate to form quinolinate. This chain is Quinolinate synthase, found in Salmonella typhi.